Consider the following 411-residue polypeptide: MEELLERVFSFSDVDKLIDFISYELQKPVILESADFFLLAYNSYYINHFDSANQQTIFSKKCPVQIFERFLKDGIIEKLKTEPEPFRVNKIESIGLNQRVVVSAKHKGEVMGYIWIQELDQNLTDEELDFLYETSFHVGKIIYKTNKLKQEKEEKAEDLIKRAIYQQFTSEKELRREAERINTVLPSMFSVVILHAANGDGEAVEDLKENIRSYLNLRDKVSHVLTIESNIVIVVASFSQKSSVSSAASEFINKLLTHFHFQKIPTPIYIGIGNEYNHLLKLGKSYTEALEVIKAAEITGNQENIPYEYAKLGIYRYLESIEQKNEFLEYENKDLALLKAKDEESSTELLKTLEIYLLNNCKTKPAAEQLFIHQNTLNYRIKQITEMTSIDLSDFRTRCQLYLDLMLMKKK.

The protein belongs to the CdaR family.

Its function is as follows. Activates transcription of the putBCP operon. Requires proline as a coactivator. This chain is Proline-responsive transcriptional activator PutR, found in Bacillus subtilis (strain 168).